Reading from the N-terminus, the 557-residue chain is Urocanate hydratase (557 aa).

NAD(+) is bound by residues 52–53 (GG), Q130, 176–178 (GMG), E196, 242–243 (NA), 263–267 (QTSAH), 273–274 (YL), and Y322. C410 is an active-site residue. G492 is an NAD(+) binding site.

This sequence belongs to the urocanase family. The cofactor is NAD(+).

The protein localises to the cytoplasm. It carries out the reaction 4-imidazolone-5-propanoate = trans-urocanate + H2O. It functions in the pathway amino-acid degradation; L-histidine degradation into L-glutamate; N-formimidoyl-L-glutamate from L-histidine: step 2/3. In terms of biological role, catalyzes the conversion of urocanate to 4-imidazolone-5-propionate. This Rhizobium meliloti (strain 1021) (Ensifer meliloti) protein is Urocanate hydratase.